The primary structure comprises 294 residues: MPHLFEGVGVALATPFTNNEVDYNALEKHVDFLLDNGVKAIIVNGTTAESPTLTEEEKEQVLESVIKQVNHRVTIIAGTGTNNTAKSIQASQRAKALGADAIMLITPYYNKTNQRGLVKHFETIANEVELPVVLYNVPSRTNMTIEPETVETLSHNQYIVAIKDATNDFEYYEDVKSRINQEEFALYSGNDDNVVEFYQRGGNGVISVIANAIPKEFQALYDAKQSGQDISNDFEPISKLLDALSVDVNPIPIKALTSHLGFGNYELRLPLLPLEDADAKVLINVFEQFKAGEL.

Threonine 47 is a pyruvate binding site. Catalysis depends on tyrosine 135, which acts as the Proton donor/acceptor. Lysine 163 serves as the catalytic Schiff-base intermediate with substrate. Isoleucine 206 is a pyruvate binding site.

The protein belongs to the DapA family. Homodimer.

Its subcellular location is the cytoplasm. It carries out the reaction L-aspartate 4-semialdehyde + pyruvate = (2S,4S)-4-hydroxy-2,3,4,5-tetrahydrodipicolinate + H2O + H(+). It participates in amino-acid biosynthesis; L-lysine biosynthesis via DAP pathway; (S)-tetrahydrodipicolinate from L-aspartate: step 3/4. In terms of biological role, catalyzes the condensation of (S)-aspartate-beta-semialdehyde [(S)-ASA] and pyruvate to 4-hydroxy-tetrahydrodipicolinate (HTPA). The chain is 4-hydroxy-tetrahydrodipicolinate synthase from Staphylococcus haemolyticus (strain JCSC1435).